The chain runs to 204 residues: NAD(P)H-quinone oxidoreductase subunit M, chloroplastic (204 aa).

The transit peptide at 1 to 27 (MASTSMSLTRACKVHAVLACSIPSVSS) directs the protein to the chloroplast.

Belongs to the NDH complex subunit M family. In terms of assembly, part of the chloroplast NDH complex, composed of a mixture of chloroplast and nucleus encoded subunits. Component of the NDH subcomplex A, at least composed of ndhH, ndhI, ndhJ, ndhK, ndhL, ndhM, ndhN and ndhO.

The protein resides in the plastid. It localises to the chloroplast thylakoid membrane. The enzyme catalyses a plastoquinone + NADH + (n+1) H(+)(in) = a plastoquinol + NAD(+) + n H(+)(out). The catalysed reaction is a plastoquinone + NADPH + (n+1) H(+)(in) = a plastoquinol + NADP(+) + n H(+)(out). Its function is as follows. NDH shuttles electrons from NAD(P)H:plastoquinone, via FMN and iron-sulfur (Fe-S) centers, to quinones in the photosynthetic chain and possibly in a chloroplast respiratory chain. The immediate electron acceptor for the enzyme in this species is believed to be plastoquinone. Couples the redox reaction to proton translocation, and thus conserves the redox energy in a proton gradient. The polypeptide is NAD(P)H-quinone oxidoreductase subunit M, chloroplastic (Physcomitrium patens (Spreading-leaved earth moss)).